A 146-amino-acid chain; its full sequence is Transcriptional regulator MraZ (146 aa).

SpoVT-AbrB domains are found at residues 7-54 and 83-126; these read HVTN…GPEL and GVYV…DPQA.

Belongs to the MraZ family. In terms of assembly, forms oligomers.

It localises to the cytoplasm. The protein localises to the nucleoid. This chain is Transcriptional regulator MraZ, found in Rhizobium meliloti (strain 1021) (Ensifer meliloti).